A 110-amino-acid chain; its full sequence is Secreted Ly-6/uPAR-related protein 1 (110 aa).

The signal sequence occupies residues 1-22 (MTLRWAMWLLLLAAWSMGYGEA). Residues 24 to 73 (RCYTCEQPTAINSCKNIAQCKMEDTACKTVLETVEAAFPFNHSPMVTRSC) form the UPAR/Ly6 domain. Disulfide bonds link C25–C50, C28–C37, C43–C73, C77–C93, and C94–C99.

As to quaternary structure, homodimer. Interacts with PLAU. Interacts with CHRNA7. In terms of tissue distribution, expressed in skin, eye, whole lung, trachea, esophagus and stomach. Widely expressed in various tissues including spleen and thymus but not pancreas. Expressed in macrophages, dendritic cells, T and B cells. Expressed in lung specifically in ciliated bronchial epithelial cells (at protein level). Expression is decreased in lungs of asthmatic model mice. Expressed in the cornea.

It localises to the secreted. In terms of biological role, has an antitumor activity. Was found to be a marker of late differentiation of the skin. Implicated in maintaining the physiological and structural integrity of the keratinocyte layers of the skin. In vitro down-regulates keratinocyte proliferation; the function may involve the proposed role as modulator of nicotinic acetylcholine receptors (nAChRs) activity. In vitro inhibits alpha-7-dependent nAChR currents in an allosteric manner. In T cells may be involved in regulation of intracellular Ca(2+) signaling. Seems to have a immunomodulatory function in the cornea. The function may implicate a possible role as a scavenger receptor for PLAU thereby blocking PLAU-dependent functions of PLAUR such as in cell migration and proliferation. The chain is Secreted Ly-6/uPAR-related protein 1 (Slurp1) from Mus musculus (Mouse).